A 123-amino-acid chain; its full sequence is Protein LLP homolog (123 aa).

Residues 1-21 (MAKSLRSKWKRKMRAEKRKKN) are compositionally biased toward basic residues. Disordered stretches follow at residues 1-22 (MAKSLRSKWKRKMRAEKRKKNA) and 61-123 (DLDV…KLAW). The span at 70–89 (ESSKMDTELKRNKKNLRDQH) shows a compositional bias: basic and acidic residues. Positions 100 to 123 (QQKKLKSQCGKKKGKSKQAKKLAW) are enriched in basic residues.

The protein belongs to the learning-associated protein family.

The protein localises to the nucleus. The protein resides in the nucleolus. It is found in the chromosome. Regulates dendritic and spine growth and synaptic transmission. This is Protein LLP homolog (llph) from Xenopus laevis (African clawed frog).